Here is a 375-residue protein sequence, read N- to C-terminus: 23S rRNA (uracil(747)-C(5))-methyltransferase RlmC (375 aa).

4 residues coordinate [4Fe-4S] cluster: Cys3, Cys11, Cys14, and Cys87. S-adenosyl-L-methionine contacts are provided by Gln212, Phe241, Glu262, and Asn307. Residue Cys334 is the Nucleophile of the active site.

The protein belongs to the class I-like SAM-binding methyltransferase superfamily. RNA M5U methyltransferase family. RlmC subfamily.

The catalysed reaction is uridine(747) in 23S rRNA + S-adenosyl-L-methionine = 5-methyluridine(747) in 23S rRNA + S-adenosyl-L-homocysteine + H(+). Catalyzes the formation of 5-methyl-uridine at position 747 (m5U747) in 23S rRNA. In Shigella flexneri serotype 5b (strain 8401), this protein is 23S rRNA (uracil(747)-C(5))-methyltransferase RlmC.